Reading from the N-terminus, the 117-residue chain is Ribosome-binding factor A (117 aa).

It belongs to the RbfA family. In terms of assembly, monomer. Binds 30S ribosomal subunits, but not 50S ribosomal subunits or 70S ribosomes.

Its subcellular location is the cytoplasm. In terms of biological role, one of several proteins that assist in the late maturation steps of the functional core of the 30S ribosomal subunit. Associates with free 30S ribosomal subunits (but not with 30S subunits that are part of 70S ribosomes or polysomes). Required for efficient processing of 16S rRNA. May interact with the 5'-terminal helix region of 16S rRNA. This is Ribosome-binding factor A from Bacillus subtilis (strain 168).